The following is a 476-amino-acid chain: Bifunctional protein HldE (476 aa).

The ribokinase stretch occupies residues 1 to 319 (MKVSLPAFEK…EALALHHGES (319 aa)). 195 to 198 (NMSE) is a binding site for ATP. Asp264 is an active-site residue. The cytidylyltransferase stretch occupies residues 345-476 (MTNGCFDILH…AIIQNIMANQ (132 aa)).

This sequence in the N-terminal section; belongs to the carbohydrate kinase PfkB family. It in the C-terminal section; belongs to the cytidylyltransferase family. In terms of assembly, homodimer.

It carries out the reaction D-glycero-beta-D-manno-heptose 7-phosphate + ATP = D-glycero-beta-D-manno-heptose 1,7-bisphosphate + ADP + H(+). The catalysed reaction is D-glycero-beta-D-manno-heptose 1-phosphate + ATP + H(+) = ADP-D-glycero-beta-D-manno-heptose + diphosphate. It functions in the pathway nucleotide-sugar biosynthesis; ADP-L-glycero-beta-D-manno-heptose biosynthesis; ADP-L-glycero-beta-D-manno-heptose from D-glycero-beta-D-manno-heptose 7-phosphate: step 1/4. It participates in nucleotide-sugar biosynthesis; ADP-L-glycero-beta-D-manno-heptose biosynthesis; ADP-L-glycero-beta-D-manno-heptose from D-glycero-beta-D-manno-heptose 7-phosphate: step 3/4. Catalyzes the phosphorylation of D-glycero-D-manno-heptose 7-phosphate at the C-1 position to selectively form D-glycero-beta-D-manno-heptose-1,7-bisphosphate. Functionally, catalyzes the ADP transfer from ATP to D-glycero-beta-D-manno-heptose 1-phosphate, yielding ADP-D-glycero-beta-D-manno-heptose. This Shewanella sp. (strain W3-18-1) protein is Bifunctional protein HldE.